A 296-amino-acid chain; its full sequence is Ribosomal RNA small subunit methyltransferase H (296 aa).

Residues 30-32 (GGH), D49, F76, D97, and Q104 each bind S-adenosyl-L-methionine.

The protein belongs to the methyltransferase superfamily. RsmH family.

It localises to the cytoplasm. The catalysed reaction is cytidine(1402) in 16S rRNA + S-adenosyl-L-methionine = N(4)-methylcytidine(1402) in 16S rRNA + S-adenosyl-L-homocysteine + H(+). Its function is as follows. Specifically methylates the N4 position of cytidine in position 1402 (C1402) of 16S rRNA. This is Ribosomal RNA small subunit methyltransferase H from Mesomycoplasma hyopneumoniae (strain 232) (Mycoplasma hyopneumoniae).